The sequence spans 607 residues: Elongation factor 4 (607 aa).

Positions 11–193 (EKIRNFSIIA…QIVEKVPAPT (183 aa)) constitute a tr-type G domain. Residues 23–28 (DHGKST) and 140–143 (NKID) contribute to the GTP site.

The protein belongs to the TRAFAC class translation factor GTPase superfamily. Classic translation factor GTPase family. LepA subfamily.

The protein localises to the cell membrane. It catalyses the reaction GTP + H2O = GDP + phosphate + H(+). Required for accurate and efficient protein synthesis under certain stress conditions. May act as a fidelity factor of the translation reaction, by catalyzing a one-codon backward translocation of tRNAs on improperly translocated ribosomes. Back-translocation proceeds from a post-translocation (POST) complex to a pre-translocation (PRE) complex, thus giving elongation factor G a second chance to translocate the tRNAs correctly. Binds to ribosomes in a GTP-dependent manner. The chain is Elongation factor 4 from Streptococcus pneumoniae (strain P1031).